The following is a 136-amino-acid chain: Type II nicking enzyme V.XorIIP (136 aa).

The protein belongs to the Vsr family.

Its function is as follows. May nick XorII sequences that contain T/G mispairs resulting from m5C-deamination. If unrepaired, these mismatches can lead to C-to-T transition mutations. The very short patch (VSP) repair process counteracts the mutagenic process by repairing the mismatches in favor of the G-containing strand. This enzyme is an endonuclease that nicks double-stranded DNA within the sequence CGATCG (C-methylation site unknown) next to the thymidine residue that is mismatched to 2'-deoxyguanosine. The incision is mismatch-dependent and strand-specific. This Xanthomonas oryzae pv. oryzae (strain KACC10331 / KXO85) protein is Type II nicking enzyme V.XorIIP.